The sequence spans 181 residues: MHKLNNVAVLYAKILFKQAIKLNIVSKVKQDLKALKQFCKFLAKQNMSLQLIALMKNKINLMDYLSSTYGLNHLTYNFLKLLQKNNRLTYLSHIIIAFDAQVRNYQGVTLGYLITTKKWSKSAIKEIKDIFERKLNRKLIISNIVDKSIVGGIILRYEDYEYDLSMLGAINRFKSRIKLNY.

The protein belongs to the ATPase delta chain family. F-type ATPases have 2 components, F(1) - the catalytic core - and F(0) - the membrane proton channel. F(1) has five subunits: alpha(3), beta(3), gamma(1), delta(1), epsilon(1). F(0) has three main subunits: a(1), b(2) and c(10-14). The alpha and beta chains form an alternating ring which encloses part of the gamma chain. F(1) is attached to F(0) by a central stalk formed by the gamma and epsilon chains, while a peripheral stalk is formed by the delta and b chains.

It is found in the cell inner membrane. F(1)F(0) ATP synthase produces ATP from ADP in the presence of a proton or sodium gradient. F-type ATPases consist of two structural domains, F(1) containing the extramembraneous catalytic core and F(0) containing the membrane proton channel, linked together by a central stalk and a peripheral stalk. During catalysis, ATP synthesis in the catalytic domain of F(1) is coupled via a rotary mechanism of the central stalk subunits to proton translocation. Functionally, this protein is part of the stalk that links CF(0) to CF(1). It either transmits conformational changes from CF(0) to CF(1) or is implicated in proton conduction. This is ATP synthase subunit delta from Orientia tsutsugamushi (strain Boryong) (Rickettsia tsutsugamushi).